Reading from the N-terminus, the 375-residue chain is Methylthioribose-1-phosphate isomerase (375 aa).

Asp-257 (proton donor) is an active-site residue.

It belongs to the eIF-2B alpha/beta/delta subunits family. MtnA subfamily.

Its subcellular location is the cytoplasm. The protein resides in the nucleus. The enzyme catalyses 5-(methylsulfanyl)-alpha-D-ribose 1-phosphate = 5-(methylsulfanyl)-D-ribulose 1-phosphate. The protein operates within amino-acid biosynthesis; L-methionine biosynthesis via salvage pathway; L-methionine from S-methyl-5-thio-alpha-D-ribose 1-phosphate: step 1/6. Catalyzes the interconversion of methylthioribose-1-phosphate (MTR-1-P) into methylthioribulose-1-phosphate (MTRu-1-P). In Leishmania infantum, this protein is Methylthioribose-1-phosphate isomerase.